The chain runs to 56 residues: uncharacterized protein (56 aa).

This is an uncharacterized protein from Treponema pallidum (strain Nichols).